Here is a 453-residue protein sequence, read N- to C-terminus: Oocyte zinc finger protein XlCOF6 (453 aa).

14 C2H2-type zinc fingers span residues 6 to 29 (FICSKCGETFTVNSHLLTHLCGKH), 67 to 89 (FTCTECGKSFSERDNLKCHHKTH), 95 to 117 (FTCMECGKGFSVKSSLKHHYKAH), 123 to 145 (VRCTECGKEFTSKYYLNVHKRLH), 151 to 173 (FTCTQCGKCFSDKSALKYHHKTH), 179 to 201 (FACTECGKSFTEKSILQKHQRTH), 207 to 229 (FTCTECGKSYSAMSTLECHRRTH), 235 to 257 (FTCTECGKSFTEKSILRKHHKTH), 263 to 285 (FTCTECGKSCTEKSILRKHQITH), 291 to 313 (FTCTECGKCFSDKTALKYHHKTH), 319 to 341 (FACTECGKSFTDKSILRNHQRTH), 375 to 397 (FTCTECGKSFTEKSILRKHHKTH), 403 to 425 (FTCTECGKSFTHKSILQKHQRTH), and 431 to 453 (FTCTECGKCFSDKTAIKYHRITH).

Belongs to the krueppel C2H2-type zinc-finger protein family.

The protein localises to the nucleus. In terms of biological role, may be involved in transcriptional regulation. The sequence is that of Oocyte zinc finger protein XlCOF6 from Xenopus laevis (African clawed frog).